Reading from the N-terminus, the 247-residue chain is Trypsin-4 (247 aa).

The first 15 residues, Met1–Ala15, serve as a signal peptide directing secretion. The propeptide at Leu16–Lys23 is activation peptide. The Peptidase S1 domain maps to Ile24–Ala245. Disulfide bonds link Cys30-Cys161, Cys49-Cys65, Cys133-Cys234, Cys140-Cys207, Cys172-Cys186, and Cys197-Cys221. His64 functions as the Charge relay system in the catalytic mechanism. Glu76, Asn78, Val81, and Glu86 together coordinate Ca(2+). The active-site Charge relay system is Asp108. Ser201 acts as the Charge relay system in catalysis.

The protein belongs to the peptidase S1 family. It depends on Ca(2+) as a cofactor. Proteolytically cleaved and activated by an autocatalytic mechanism. Cleavage by CTRC inhibits autoactivation.

Its subcellular location is the secreted. It localises to the extracellular space. It carries out the reaction Preferential cleavage: Arg-|-Xaa, Lys-|-Xaa.. With respect to regulation, activated by autocatalytic cleavage. Cleavage by CTRC inhibits autoactivation. Its function is as follows. Serine protease capable of autoactivation. The polypeptide is Trypsin-4 (Rattus norvegicus (Rat)).